A 243-amino-acid polypeptide reads, in one-letter code: Carboxy-S-adenosyl-L-methionine synthase (243 aa).

Residues Y40, 65 to 67, 90 to 91, 118 to 119, N133, and R200 each bind S-adenosyl-L-methionine; these read GCS, DN, and DI.

Belongs to the class I-like SAM-binding methyltransferase superfamily. Cx-SAM synthase family. In terms of assembly, homodimer.

The enzyme catalyses prephenate + S-adenosyl-L-methionine = carboxy-S-adenosyl-L-methionine + 3-phenylpyruvate + H2O. Functionally, catalyzes the conversion of S-adenosyl-L-methionine (SAM) to carboxy-S-adenosyl-L-methionine (Cx-SAM). The sequence is that of Carboxy-S-adenosyl-L-methionine synthase from Shewanella woodyi (strain ATCC 51908 / MS32).